We begin with the raw amino-acid sequence, 254 residues long: Triosephosphate isomerase (254 aa).

10–12 (NWK) is a substrate binding site. Catalysis depends on histidine 96, which acts as the Electrophile. Glutamate 168 serves as the catalytic Proton acceptor. Substrate is bound by residues glycine 174, serine 214, and 235–236 (GG).

It belongs to the triosephosphate isomerase family. Homodimer.

It is found in the cytoplasm. It carries out the reaction D-glyceraldehyde 3-phosphate = dihydroxyacetone phosphate. Its pathway is carbohydrate biosynthesis; gluconeogenesis. It functions in the pathway carbohydrate degradation; glycolysis; D-glyceraldehyde 3-phosphate from glycerone phosphate: step 1/1. Functionally, involved in the gluconeogenesis. Catalyzes stereospecifically the conversion of dihydroxyacetone phosphate (DHAP) to D-glyceraldehyde-3-phosphate (G3P). The polypeptide is Triosephosphate isomerase (Rhodopirellula baltica (strain DSM 10527 / NCIMB 13988 / SH1)).